A 1232-amino-acid polypeptide reads, in one-letter code: Anoctamin-8 (1232 aa).

The disordered stretch occupies residues 1-32 (MAEAASGAGGTSLEGERGKRPPPEGEPAAPAS). Alanine 2 is subject to N-acetylalanine. At 2 to 244 (AEAASGAGGT…DDICDYFGVK (243 aa)) the chain is on the extracellular side. Residues 14-23 (EGERGKRPPP) are compositionally biased toward basic and acidic residues. The helical transmembrane segment at 245-265 (IAMYFAWLGFYTSAMVYPAVF) threads the bilayer. Residues 266 to 281 (GSVLYTFTEADQTSRD) are Cytoplasmic-facing. Residues 282–302 (VSCVVFALFNVIWSTLFLEEW) form a helical membrane-spanning segment. Topologically, residues 303 to 356 (KRRGAELAYKWGTLDSPGEAVEEPRPQFRGVRRISPITRAEEFYYPPWKRLLFQ) are extracellular. Serine 318 carries the post-translational modification Phosphoserine. Residues 357-377 (LLVSLPLCLACLVCVFLLMLG) traverse the membrane as a helical segment. Topologically, residues 378 to 400 (CFQLQELVLSVKGLPRLARFLPK) are cytoplasmic. Residues 401-421 (VMLALLVSVSAEGYKKLAIWL) form a helical membrane-spanning segment. Residues 422–437 (NDMENYRLESAYEKHL) lie on the Extracellular side of the membrane. The helical transmembrane segment at 438–458 (IIKVVLFQFVNSYLSLFYIGF) threads the bilayer. Residues 459–750 (YLKDMERLKE…YEDTFQDYQE (292 aa)) are Cytoplasmic-facing. A disordered region spans residues 524-650 (RRLEPQADEG…SPTMVEKGLE (127 aa)). The span at 532–551 (EGGGGGSGGGGRRCLSGGCG) shows a compositional bias: gly residues. The segment covering 582-606 (EEDEDDEEEEDEEEEEDEEEGEEGG) has biased composition (acidic residues). A Phosphoserine modification is found at serine 669. A disordered region spans residues 681 to 728 (RAGGEGRDQGPDGGPDPEPGSNSDSTRRQRRQNRSSWIDPPEEEHSPQ). The helical transmembrane segment at 751-771 (MFVQFGYVVLFSSAFPLAALC) threads the bilayer. Topologically, residues 772 to 807 (ALVNNLIEIRSDAFKLCTGLQRPFGQRVESIGQWQK) are extracellular. Serine 801 is modified (phosphoserine; by FAM20C). The helical transmembrane segment at 808-828 (VMEAMGVLAIVVNCYLIGQCG) threads the bilayer. The Cytoplasmic portion of the chain corresponds to 829–841 (QLQRLFPWLSPEA). The chain crosses the membrane as a helical span at residues 842-862 (AIVSVVVLEHFALLLKYLIHV). At 863–1232 (AIPDIPGWVA…QAVCWPSGWH (370 aa)) the chain is on the extracellular side. 3 disordered regions span residues 888 to 970 (RHER…GSLL), 997 to 1152 (LAAA…WQWD), and 1174 to 1232 (PPCA…SGWH). Residues 904-932 (RREEEERQRHAEHHARREHDSGGREEARA) are compositionally biased toward basic and acidic residues. 2 stretches are compositionally biased toward low complexity: residues 933 to 953 (EGSG…AKGS) and 997 to 1006 (LAAAGAGATT). An Asymmetric dimethylarginine; alternate modification is found at arginine 1020. Arginine 1020 is subject to Omega-N-methylarginine; alternate. A compositionally biased stretch (basic and acidic residues) spans 1031 to 1043 (KSPETRRDSERSH). A compositionally biased stretch (polar residues) spans 1078 to 1087 (TPSSGSSRVQ). 2 stretches are compositionally biased toward pro residues: residues 1130–1145 (PAPP…PTPP) and 1197–1221 (LPPP…PSPS).

Belongs to the anoctamin family. As to expression, expressed in embryonic stem cells, fetal brain and neural tissues.

Its subcellular location is the cell membrane. In terms of biological role, does not exhibit calcium-activated chloride channel (CaCC) activity. The polypeptide is Anoctamin-8 (ANO8) (Homo sapiens (Human)).